A 161-amino-acid polypeptide reads, in one-letter code: Regulator of ribonuclease activity A (161 aa).

Belongs to the RraA family. As to quaternary structure, homotrimer. Binds to both RNA-binding sites in the C-terminal region of Rne and to RhlB.

The protein localises to the cytoplasm. Globally modulates RNA abundance by binding to RNase E (Rne) and regulating its endonucleolytic activity. Can modulate Rne action in a substrate-dependent manner by altering the composition of the degradosome. Modulates RNA-binding and helicase activities of the degradosome. The sequence is that of Regulator of ribonuclease activity A from Erwinia tasmaniensis (strain DSM 17950 / CFBP 7177 / CIP 109463 / NCPPB 4357 / Et1/99).